Here is a 209-residue protein sequence, read N- to C-terminus: Imidazoleglycerol-phosphate dehydratase (209 aa).

It belongs to the imidazoleglycerol-phosphate dehydratase family.

The protein localises to the cytoplasm. It carries out the reaction D-erythro-1-(imidazol-4-yl)glycerol 3-phosphate = 3-(imidazol-4-yl)-2-oxopropyl phosphate + H2O. Its pathway is amino-acid biosynthesis; L-histidine biosynthesis; L-histidine from 5-phospho-alpha-D-ribose 1-diphosphate: step 6/9. In Nostoc sp. (strain PCC 7120 / SAG 25.82 / UTEX 2576), this protein is Imidazoleglycerol-phosphate dehydratase.